The sequence spans 191 residues: Thymidine kinase (191 aa).

ATP is bound by residues 15 to 22 (GPMYSGKT) and 88 to 91 (DEAQ). The Proton acceptor role is filled by E89. Residues C145, C148, C183, and C186 each coordinate Zn(2+).

It belongs to the thymidine kinase family. Homotetramer.

The protein localises to the cytoplasm. The enzyme catalyses thymidine + ATP = dTMP + ADP + H(+). This chain is Thymidine kinase, found in Clostridium botulinum (strain Loch Maree / Type A3).